Here is a 134-residue protein sequence, read N- to C-terminus: Replication enhancer protein (134 aa).

The protein belongs to the geminiviridae replication enhancer protein family. Homooligomer. Interacts with the replication-associated protein (REP). Interacts with host proliferating cell nuclear antigen (PCNA). Interacts with host retinoblastoma-related protein 1 (RBR1), and may thereby deregulate the host cell cycle. Oligomerization and interaction with PCNA are necessary for optimal replication enhancement.

In terms of biological role, increases viral DNA accumulation. Enhances infectivity and symptom expression. This Tomato leaf curl virus (strain Australia) (ToLCV) protein is Replication enhancer protein.